A 138-amino-acid polypeptide reads, in one-letter code: Small ribosomal subunit protein uS11c (138 aa).

The tract at residues 1–22 is disordered; the sequence is MAKSIPRISSRRNGRIGSGNNV.

This sequence belongs to the universal ribosomal protein uS11 family. As to quaternary structure, part of the 30S ribosomal subunit.

The protein localises to the plastid. In Cuscuta reflexa (Southern Asian dodder), this protein is Small ribosomal subunit protein uS11c.